We begin with the raw amino-acid sequence, 253 residues long: Tryptophan synthase alpha chain (253 aa).

Catalysis depends on proton acceptor residues Glu-47 and Asp-58.

This sequence belongs to the TrpA family. Tetramer of two alpha and two beta chains.

The enzyme catalyses (1S,2R)-1-C-(indol-3-yl)glycerol 3-phosphate + L-serine = D-glyceraldehyde 3-phosphate + L-tryptophan + H2O. The protein operates within amino-acid biosynthesis; L-tryptophan biosynthesis; L-tryptophan from chorismate: step 5/5. Functionally, the alpha subunit is responsible for the aldol cleavage of indoleglycerol phosphate to indole and glyceraldehyde 3-phosphate. The chain is Tryptophan synthase alpha chain from Lactococcus lactis subsp. cremoris (strain MG1363).